The chain runs to 859 residues: MALLSSSLSSHIPTGAHHLTLNAYANTQCIPHFFSTLNAGTSAGKRSSLYLRWGKGSNKIIACVGEDSVSAPTLLKREFPPGFWKDHVIDSLTSSHKVAASDEKRIETLISEIKNMFRSMGYGETNPSAYDTAWVARIPAVDGSEQPEFPETLEWILQNQLKDGSWGEGFYFLAYDRILATLACIITLTLWRTGEIQVQKGIEFFKTQAVKIEDEADSHRPSGFEIVFPAMLKEAKVLGLDLPYELPFIKKIIEKREAKLERLPTNILYALPTTLLYSLEGLQEIVDWQKIIKLQSKDGSFLTSPASTAAVFMRTGNKKCLEFLNFVLKKFGNHVPCHYPLDLFERLWAVDTVERLGIDRHFKEEIKDALDYVYSHWDERGIGWARENLVPDIDDTAMGLRILRLHGYNVSSDVLKTFRDENGEFFCFLGQTQRGVTDMLNVNRCSHVAFPGETIMEEAKTCTERYLRNALEDVGAFDKWALKKNIRGEVEYALKYPWHRSMPRLEARSYIEHYGPNDVWLGKTMYMMPYISNEKYLELAKLDFNHVQSLHQKELRDLRRWWTSSGFTELKFTRERVTEIYFSPASFMFEPEFATCRAVYTKTSNFTVILDDLYDAHGTLDDLKLFSDSVKKWDLSLVDRMPEDMKICFMGFYNTFNEIAEEGRKRQGRDVLGYIRNVWEIQLEAYTKEAEWSAARYVPSFDEYIENASVSIALGTVVLISALFTGEILTDDVLSKIGRGSRFLQLMGLTGRLVNDTKTYEAERGQGEVASAVQCYMKDHPEISEEEALKHVYTVMENALDELNREFVNNREVPDSCRRLVFETARIMQLFYMDGDGLTLSHETEIKEHVKNCLFHPVA.

A chloroplast-targeting transit peptide spans methionine 1–arginine 52. Residues aspartate 392, aspartate 394, aspartate 611, aspartate 615, asparagine 755, and glutamate 763 each coordinate Mg(2+). Residues aspartate 392–aspartate 395 carry the DXDD motif motif. The DDXXD motif signature appears at aspartate 611–aspartate 615.

Belongs to the terpene synthase family. Tpsd subfamily. The cofactor is Mg(2+). Mn(2+) serves as cofactor.

It localises to the plastid. Its subcellular location is the chloroplast. It carries out the reaction (+)-copalyl diphosphate = abieta-8(14),12-diene + diphosphate. It catalyses the reaction (+)-copalyl diphosphate = abieta-7,13-diene + diphosphate. It participates in secondary metabolite biosynthesis; terpenoid biosynthesis. Its pathway is terpene metabolism; oleoresin biosynthesis. In terms of biological role, terpene synthase (di-TPS) involved in the biosynthesis of diterpene natural products included in conifer oleoresin secretions and volatile emissions; these compounds contribute to biotic and abiotic stress defense against herbivores and pathogens. Catalyzes the conversion of (+)-copalyl diphosphate ((+)-CPP) to isopimaradiene. The polypeptide is Bifunctional levopimaradiene synthase, chloroplastic (Picea sitchensis (Sitka spruce)).